Consider the following 343-residue polypeptide: 4-hydroxy-3-methylbut-2-enyl diphosphate reductase (343 aa).

[4Fe-4S] cluster is bound at residue Cys-18. Positions 47 and 83 each coordinate (2E)-4-hydroxy-3-methylbut-2-enyl diphosphate. The dimethylallyl diphosphate site is built by His-47 and His-83. Isopentenyl diphosphate contacts are provided by His-47 and His-83. Cys-105 is a binding site for [4Fe-4S] cluster. His-133 contacts (2E)-4-hydroxy-3-methylbut-2-enyl diphosphate. Dimethylallyl diphosphate is bound at residue His-133. Residue His-133 participates in isopentenyl diphosphate binding. Residue Glu-135 is the Proton donor of the active site. Thr-174 provides a ligand contact to (2E)-4-hydroxy-3-methylbut-2-enyl diphosphate. Residue Cys-204 coordinates [4Fe-4S] cluster. (2E)-4-hydroxy-3-methylbut-2-enyl diphosphate-binding residues include Ser-232, Ser-233, Asn-234, and Ser-277. Ser-232, Ser-233, Asn-234, and Ser-277 together coordinate dimethylallyl diphosphate. Isopentenyl diphosphate contacts are provided by Ser-232, Ser-233, Asn-234, and Ser-277.

This sequence belongs to the IspH family. [4Fe-4S] cluster serves as cofactor.

The catalysed reaction is isopentenyl diphosphate + 2 oxidized [2Fe-2S]-[ferredoxin] + H2O = (2E)-4-hydroxy-3-methylbut-2-enyl diphosphate + 2 reduced [2Fe-2S]-[ferredoxin] + 2 H(+). The enzyme catalyses dimethylallyl diphosphate + 2 oxidized [2Fe-2S]-[ferredoxin] + H2O = (2E)-4-hydroxy-3-methylbut-2-enyl diphosphate + 2 reduced [2Fe-2S]-[ferredoxin] + 2 H(+). Its pathway is isoprenoid biosynthesis; dimethylallyl diphosphate biosynthesis; dimethylallyl diphosphate from (2E)-4-hydroxy-3-methylbutenyl diphosphate: step 1/1. It participates in isoprenoid biosynthesis; isopentenyl diphosphate biosynthesis via DXP pathway; isopentenyl diphosphate from 1-deoxy-D-xylulose 5-phosphate: step 6/6. Catalyzes the conversion of 1-hydroxy-2-methyl-2-(E)-butenyl 4-diphosphate (HMBPP) into a mixture of isopentenyl diphosphate (IPP) and dimethylallyl diphosphate (DMAPP). Acts in the terminal step of the DOXP/MEP pathway for isoprenoid precursor biosynthesis. This is 4-hydroxy-3-methylbut-2-enyl diphosphate reductase from Bartonella henselae (strain ATCC 49882 / DSM 28221 / CCUG 30454 / Houston 1) (Rochalimaea henselae).